The sequence spans 434 residues: MAQFDLVHINCQYLDRHLTFPLLEFLCGKEIYNQQELLEYILETVKKTNMIDYTMDTRKRLNLSQEMPEELVQQKADVLATLKQLQNEVAPIMKATDILKDGETMKDSKTFVSALQRDYNFKMEHLYSAYKLAKYLYECGNYQESTSYLYFCLIVMAPSDKNYLDVLWGKLAAEILTLNWNTALEDLTRLRDYIDNASFSTLQALQQRTWLIHWSVLVFFNHPKGRDLIIEMFLYKPLYLNAIQTMCPHIMRYLATAVVINRTRRNALKDLIKVIQQESYTYRDPITEFLECLYVNFDFEGARLKLHECQTVILNDFFIVSCLNEFVEDARLMIFETFCRIHQCITISMLADKLNMKPNEAECWIVNLIRNARLNAKIDSKLGHVVMGTQPLSPYQQLVEKIDSLSMRSEHLADLIERKSKQKNQESIDSWKYY.

The 174-residue stretch at 219 to 392 folds into the PCI domain; sequence FFNHPKGRDL…GHVVMGTQPL (174 aa).

This sequence belongs to the eIF-3 subunit E family. Component of the eukaryotic translation initiation factor 3 (eIF-3) complex. The eIF-3 complex interacts with pix. Interacts with mxt.

It is found in the cytoplasm. Component of the eukaryotic translation initiation factor 3 (eIF-3) complex, which is involved in protein synthesis of a specialized repertoire of mRNAs and, together with other initiation factors, stimulates binding of mRNA and methionyl-tRNAi to the 40S ribosome. The eIF-3 complex specifically targets and initiates translation of a subset of mRNAs involved in cell proliferation. This Drosophila willistoni (Fruit fly) protein is Eukaryotic translation initiation factor 3 subunit E-1 (eIF3-S6-1).